The primary structure comprises 371 residues: 2-aminoethylphosphonate--pyruvate transaminase (371 aa).

The residue at position 195 (K195) is an N6-(pyridoxal phosphate)lysine.

This sequence belongs to the class-V pyridoxal-phosphate-dependent aminotransferase family. PhnW subfamily. As to quaternary structure, homotetramer; however this is for an enzyme with a molecular weight of 16500, which is in disagreement with the weight of this protein. Pyridoxal 5'-phosphate is required as a cofactor.

It catalyses the reaction (2-aminoethyl)phosphonate + pyruvate = phosphonoacetaldehyde + L-alanine. Its activity is regulated as follows. Inhibited by phosphonic acids and very slightly inhibited by aminophosphonic acids. Involved in phosphonate degradation. This is 2-aminoethylphosphonate--pyruvate transaminase (phnW) from Pseudomonas aeruginosa (strain ATCC 15692 / DSM 22644 / CIP 104116 / JCM 14847 / LMG 12228 / 1C / PRS 101 / PAO1).